Reading from the N-terminus, the 417-residue chain is Serine--tRNA ligase (417 aa).

Residue 226 to 228 (TSE) coordinates L-serine. ATP-binding positions include 257 to 259 (RRE) and Val273. Glu280 contacts L-serine. 344–347 (ELTS) is an ATP binding site. Thr379 contributes to the L-serine binding site.

It belongs to the class-II aminoacyl-tRNA synthetase family. Type-1 seryl-tRNA synthetase subfamily. Homodimer. The tRNA molecule binds across the dimer.

It localises to the cytoplasm. It catalyses the reaction tRNA(Ser) + L-serine + ATP = L-seryl-tRNA(Ser) + AMP + diphosphate + H(+). The enzyme catalyses tRNA(Sec) + L-serine + ATP = L-seryl-tRNA(Sec) + AMP + diphosphate + H(+). The protein operates within aminoacyl-tRNA biosynthesis; selenocysteinyl-tRNA(Sec) biosynthesis; L-seryl-tRNA(Sec) from L-serine and tRNA(Sec): step 1/1. Functionally, catalyzes the attachment of serine to tRNA(Ser). Is also able to aminoacylate tRNA(Sec) with serine, to form the misacylated tRNA L-seryl-tRNA(Sec), which will be further converted into selenocysteinyl-tRNA(Sec). The polypeptide is Serine--tRNA ligase (Mycobacterium sp. (strain JLS)).